The sequence spans 184 residues: ATP synthase subunit b, chloroplastic (184 aa).

Residues 27-49 (LATNPINLSVVLGVLIFFGKGVL) traverse the membrane as a helical segment.

This sequence belongs to the ATPase B chain family. F-type ATPases have 2 components, F(1) - the catalytic core - and F(0) - the membrane proton channel. F(1) has five subunits: alpha(3), beta(3), gamma(1), delta(1), epsilon(1). F(0) has four main subunits: a(1), b(1), b'(1) and c(10-14). The alpha and beta chains form an alternating ring which encloses part of the gamma chain. F(1) is attached to F(0) by a central stalk formed by the gamma and epsilon chains, while a peripheral stalk is formed by the delta, b and b' chains.

It is found in the plastid. It localises to the chloroplast thylakoid membrane. In terms of biological role, f(1)F(0) ATP synthase produces ATP from ADP in the presence of a proton or sodium gradient. F-type ATPases consist of two structural domains, F(1) containing the extramembraneous catalytic core and F(0) containing the membrane proton channel, linked together by a central stalk and a peripheral stalk. During catalysis, ATP synthesis in the catalytic domain of F(1) is coupled via a rotary mechanism of the central stalk subunits to proton translocation. Its function is as follows. Component of the F(0) channel, it forms part of the peripheral stalk, linking F(1) to F(0). The chain is ATP synthase subunit b, chloroplastic from Cuscuta exaltata (Tall dodder).